The sequence spans 782 residues: Cleavage and polyadenylation specificity factor subunit 2 (782 aa).

Over residues 407–416 (KKLEQSKEAD) the composition is skewed to basic and acidic residues. The interval 407-449 (KKLEQSKEADIDSSDESDIEEDIDQPSAHKTKHDLMMKGEGSR) is disordered. The segment covering 417-430 (IDSSDESDIEEDID) has biased composition (acidic residues). Phosphoserine is present on residues Ser-419, Ser-420, and Ser-423. Over residues 439 to 449 (HDLMMKGEGSR) the composition is skewed to basic and acidic residues. Phosphoserine is present on Ser-660.

This sequence belongs to the metallo-beta-lactamase superfamily. RNA-metabolizing metallo-beta-lactamase-like family. CPSF2/YSH1 subfamily. As to quaternary structure, component of the cleavage and polyadenylation specificity factor (CPSF) complex, composed of CPSF1, CPSF2, CPSF3, CPSF4 and FIP1L1. Interacts with CPSF3, CSTF2 and SYMPK. Interacts with ZC3H3.

It localises to the nucleus. Functionally, component of the cleavage and polyadenylation specificity factor (CPSF) complex that play a key role in pre-mRNA 3'-end formation, recognizing the AAUAAA signal sequence and interacting with poly(A) polymerase and other factors to bring about cleavage and poly(A) addition. Involved in the histone 3' end pre-mRNA processing. In Homo sapiens (Human), this protein is Cleavage and polyadenylation specificity factor subunit 2 (CPSF2).